Consider the following 386-residue polypeptide: Methionyl-tRNA formyltransferase, mitochondrial (386 aa).

Belongs to the Fmt family.

Its subcellular location is the mitochondrion. The enzyme catalyses L-methionyl-tRNA(fMet) + (6R)-10-formyltetrahydrofolate = N-formyl-L-methionyl-tRNA(fMet) + (6S)-5,6,7,8-tetrahydrofolate + H(+). Its function is as follows. Methionyl-tRNA formyltransferase that formylates methionyl-tRNA in mitochondria and is crucial for translation initiation. In Mus musculus (Mouse), this protein is Methionyl-tRNA formyltransferase, mitochondrial (Mtfmt).